The chain runs to 470 residues: E3 SUMO-protein ligase EGR2 (470 aa).

The span at 126-141 (PPASTTASSSVTSASP) shows a compositional bias: low complexity. Disordered regions lie at residues 126–153 (PPAS…GVCT), 159–178 (PELD…SGCT), and 184–211 (DPSA…YPSP). Residue Lys247 is modified to N6-acetyllysine; by EP300. Residues 275 to 344 (GPSAGVTGPG…RPYPCPAEGC (70 aa)) form a disordered region. Residues 281–291 (TGPGASGGGEG) are compositionally biased toward gly residues. 3 consecutive C2H2-type zinc fingers follow at residues 337–361 (YPCP…IRIH), 367–389 (FQCR…IRTH), and 395–417 (FACD…TKIH). The segment at 408-470 (DERKRHTKIH…ASCTSRTRTP (63 aa)) is disordered. Basic residues predominate over residues 412-422 (RHTKIHLRQKE). The span at 426–439 (SAPSSSASAQSSAS) shows a compositional bias: low complexity. Gly residues predominate over residues 440 to 450 (GPGGSQAGGSL).

This sequence belongs to the EGR C2H2-type zinc-finger protein family. Interacts with HCFC1. Interacts with WWP2. Interacts with UBC9. Interacts with CITED1. Interacts (via phosphorylated form) with SFN. Post-translationally, ubiquitinated by WWP2 leading to proteasomal degradation. Acetylated at Lys-247. May be deacetylated by HDAC6, HDAC10 or SIRT1.

It localises to the nucleus. It functions in the pathway protein modification; protein sumoylation. In terms of biological role, sequence-specific DNA-binding transcription factor. Plays a role in hindbrain segmentation by regulating the expression of a subset of homeobox containing genes and in Schwann cell myelination by regulating the expression of genes involved in the formation and maintenance of myelin. Binds to two EGR2-consensus sites EGR2A (5'-CTGTAGGAG-3') and EGR2B (5'-ATGTAGGTG-3') in the HOXB3 enhancer and promotes HOXB3 transcriptional activation. Binds to specific DNA sites located in the promoter region of HOXA4, HOXB2 and ERBB2. Regulates hindbrain segmentation by controlling the expression of Hox genes, such as HOXA4, HOXB3 and HOXB2, and thereby specifying odd and even rhombomeres. Promotes the expression of HOXB3 in the rhombomere r5 in the hindbrain. Regulates myelination in the peripheral nervous system after birth, possibly by regulating the expression of myelin proteins, such as MPZ, and by promoting the differentiation of Schwann cells. Involved in the development of the jaw openener musculature, probably by playing a role in its innervation through trigeminal motor neurons. May play a role in adipogenesis, possibly by regulating the expression of CEBPB. Functionally, E3 SUMO-protein ligase helping SUMO1 conjugation to its coregulators NAB1 and NAB2, whose sumoylation down-regulates EGR2 transcriptional activity. This Rattus norvegicus (Rat) protein is E3 SUMO-protein ligase EGR2 (Egr2).